A 460-amino-acid polypeptide reads, in one-letter code: tRNA-2-methylthio-N(6)-dimethylallyladenosine synthase (460 aa).

One can recognise an MTTase N-terminal domain in the interval 23 to 138 (RKVYVHTFGC…LPEMVARAER (116 aa)). Cys-32, Cys-68, Cys-101, Cys-176, Cys-180, and Cys-183 together coordinate [4Fe-4S] cluster. Residues 162 to 394 (ARGRPTAFVT…QAAQRRIAAA (233 aa)) enclose the Radical SAM core domain. A TRAM domain is found at 397 to 460 (AAELGKVVEV…GGSSLSGTPA (64 aa)).

It belongs to the methylthiotransferase family. MiaB subfamily. In terms of assembly, monomer. [4Fe-4S] cluster serves as cofactor.

The protein resides in the cytoplasm. It carries out the reaction N(6)-dimethylallyladenosine(37) in tRNA + (sulfur carrier)-SH + AH2 + 2 S-adenosyl-L-methionine = 2-methylsulfanyl-N(6)-dimethylallyladenosine(37) in tRNA + (sulfur carrier)-H + 5'-deoxyadenosine + L-methionine + A + S-adenosyl-L-homocysteine + 2 H(+). Catalyzes the methylthiolation of N6-(dimethylallyl)adenosine (i(6)A), leading to the formation of 2-methylthio-N6-(dimethylallyl)adenosine (ms(2)i(6)A) at position 37 in tRNAs that read codons beginning with uridine. The chain is tRNA-2-methylthio-N(6)-dimethylallyladenosine synthase from Anaeromyxobacter sp. (strain Fw109-5).